The sequence spans 148 residues: Lipoprotein MlpH (148 aa).

A signal peptide spans 1 to 17 (MKIINILFCLFLLMLNG). The N-palmitoyl cysteine moiety is linked to residue cysteine 18. A lipid anchor (S-diacylglycerol cysteine) is attached at cysteine 18. Residues 26–61 (LKNNAQQTKSRRKRDLTQKEVTQEKPKSKEELLREK) form a disordered region. Over residues 40–61 (DLTQKEVTQEKPKSKEELLREK) the composition is skewed to basic and acidic residues.

The protein belongs to the Multicopy lipoprotein (Mlp) family.

It localises to the cell outer membrane. An outer membrane protein that may participate in pathogenesis. Some human Lyme disease patients have antibodies against this protein. The Mlp proteins probably undergo intragenic recombination, generating new alleles. The protein is Lipoprotein MlpH of Borreliella burgdorferi (strain ATCC 35210 / DSM 4680 / CIP 102532 / B31) (Borrelia burgdorferi).